Reading from the N-terminus, the 288-residue chain is Tryptophan 2,3-dioxygenase (288 aa).

Residues 57–61 (FIIQH), Tyr-119, and Arg-123 contribute to the substrate site. His-246 serves as a coordination point for heme. Thr-260 lines the substrate pocket.

The protein belongs to the tryptophan 2,3-dioxygenase family. As to quaternary structure, homotetramer. It depends on heme as a cofactor.

The catalysed reaction is L-tryptophan + O2 = N-formyl-L-kynurenine. It functions in the pathway amino-acid degradation; L-tryptophan degradation via kynurenine pathway; L-kynurenine from L-tryptophan: step 1/2. Functionally, heme-dependent dioxygenase that catalyzes the oxidative cleavage of the L-tryptophan (L-Trp) pyrrole ring and converts L-tryptophan to N-formyl-L-kynurenine. Catalyzes the oxidative cleavage of the indole moiety. This Pseudomonas aeruginosa (strain UCBPP-PA14) protein is Tryptophan 2,3-dioxygenase.